A 118-amino-acid chain; its full sequence is DNA-binding protein M164_1799 (118 aa).

This sequence belongs to the PDCD5 family.

The chain is DNA-binding protein M164_1799 from Saccharolobus islandicus (strain M.16.4 / Kamchatka #3) (Sulfolobus islandicus).